The chain runs to 148 residues: Large ribosomal subunit protein uL13 (148 aa).

Composition is skewed to basic and acidic residues over residues 71–81 (GKKEKQKEYHE) and 89–99 (DHSHSPEEMRA). 2 disordered regions span residues 71–99 (GKKE…EMRA) and 125–148 (KKLK…LDNA).

It belongs to the universal ribosomal protein uL13 family. In terms of assembly, part of the 50S ribosomal subunit.

Its function is as follows. This protein is one of the early assembly proteins of the 50S ribosomal subunit, although it is not seen to bind rRNA by itself. It is important during the early stages of 50S assembly. The sequence is that of Large ribosomal subunit protein uL13 from Salinibacter ruber (strain DSM 13855 / M31).